Reading from the N-terminus, the 487-residue chain is MTTHYIAGSWQAGQGEALQSLNPVTQAVVWQGQGADASQVDAAVLAARQAFPAWAQLSLEARIDVLEKFAEQLKQHSEALAYCIGEETGKPLWESATEVTSMVNKVAISIQSYRERTGEKSGPLADATAVLRHKPHGVVAVFGPYNFPGHLPNGHIVPALLAGNCVVFKPSELTPKVAELTVNCWIAAGLPAGVLNLVQGARETGVALAANPGIDGLFFTGSSRTGNLLHQQFAGRPDKILALEMGGNNPLVVDGVKDLDAAVYTIIQSAFISAGQRCTCARRLLVPQGAWGDALVIRLVEVCKSITVGAFDQQPAPFMGSVISLQAARALVAAQSELLAKGATQLLEMTQPQADAALLTPGIIDVTAVADRPDEEFFGPLLQVIRYADFDAAIDEANNTQYGLAAGLLSDSRARYQYFWLRSRAGIVNWNKQLTGAASSAPFGGIGASGNHRASAYYAADYCAYPVASLETASLALPATLTPGVTL.

221-226 (GSSRTG) contacts NAD(+). Catalysis depends on residues E244 and C278.

This sequence belongs to the aldehyde dehydrogenase family. AstD subfamily.

The enzyme catalyses N-succinyl-L-glutamate 5-semialdehyde + NAD(+) + H2O = N-succinyl-L-glutamate + NADH + 2 H(+). It functions in the pathway amino-acid degradation; L-arginine degradation via AST pathway; L-glutamate and succinate from L-arginine: step 4/5. Functionally, catalyzes the NAD-dependent reduction of succinylglutamate semialdehyde into succinylglutamate. In Pseudomonas putida (strain W619), this protein is N-succinylglutamate 5-semialdehyde dehydrogenase.